A 64-amino-acid polypeptide reads, in one-letter code: Large ribosomal subunit protein uL29 (64 aa).

Belongs to the universal ribosomal protein uL29 family.

The chain is Large ribosomal subunit protein uL29 (rpl29) from Methanothermobacter thermautotrophicus (strain ATCC 29096 / DSM 1053 / JCM 10044 / NBRC 100330 / Delta H) (Methanobacterium thermoautotrophicum).